Consider the following 131-residue polypeptide: Phosphoribosyl-AMP cyclohydrolase (131 aa).

Aspartate 90 contributes to the Mg(2+) binding site. Residue cysteine 91 coordinates Zn(2+). Aspartate 92 and aspartate 94 together coordinate Mg(2+). Cysteine 107 and cysteine 114 together coordinate Zn(2+).

This sequence belongs to the PRA-CH family. As to quaternary structure, homodimer. It depends on Mg(2+) as a cofactor. Zn(2+) is required as a cofactor.

Its subcellular location is the cytoplasm. The enzyme catalyses 1-(5-phospho-beta-D-ribosyl)-5'-AMP + H2O = 1-(5-phospho-beta-D-ribosyl)-5-[(5-phospho-beta-D-ribosylamino)methylideneamino]imidazole-4-carboxamide. It participates in amino-acid biosynthesis; L-histidine biosynthesis; L-histidine from 5-phospho-alpha-D-ribose 1-diphosphate: step 3/9. Catalyzes the hydrolysis of the adenine ring of phosphoribosyl-AMP. The polypeptide is Phosphoribosyl-AMP cyclohydrolase (Hyphomonas neptunium (strain ATCC 15444)).